We begin with the raw amino-acid sequence, 452 residues long: PHO85 cyclin CLG1 (452 aa).

It belongs to the cyclin family. PCL1,2 subfamily. Forms a cyclin-CDK complex with PHO85.

Cyclin partner of the cyclin-dependent kinase (CDK) PHO85. Has a role in cell integrity and polarized cell growth together with the other PCL1/PCL2 cyclin family members. The chain is PHO85 cyclin CLG1 (CLG1) from Saccharomyces cerevisiae (strain ATCC 204508 / S288c) (Baker's yeast).